Reading from the N-terminus, the 119-residue chain is Large ribosomal subunit protein uL24 (119 aa).

It belongs to the universal ribosomal protein uL24 family. As to quaternary structure, part of the 50S ribosomal subunit.

In terms of biological role, one of two assembly initiator proteins, it binds directly to the 5'-end of the 23S rRNA, where it nucleates assembly of the 50S subunit. One of the proteins that surrounds the polypeptide exit tunnel on the outside of the subunit. This chain is Large ribosomal subunit protein uL24, found in Clavibacter michiganensis subsp. michiganensis (strain NCPPB 382).